Here is a 94-residue protein sequence, read N- to C-terminus: Large ribosomal subunit protein uL23 (94 aa).

It belongs to the universal ribosomal protein uL23 family. In terms of assembly, part of the 50S ribosomal subunit. Contacts protein L29, and trigger factor when it is bound to the ribosome.

Functionally, one of the early assembly proteins it binds 23S rRNA. One of the proteins that surrounds the polypeptide exit tunnel on the outside of the ribosome. Forms the main docking site for trigger factor binding to the ribosome. The protein is Large ribosomal subunit protein uL23 of Treponema pallidum (strain Nichols).